The primary structure comprises 379 residues: tRNA-specific 2-thiouridylase MnmA (379 aa).

ATP-binding positions include 9–16 (AMSGGVDS) and Met35. Positions 94–96 (NPD) are interaction with target base in tRNA. Residue Cys99 is the Nucleophile of the active site. A disulfide bond links Cys99 and Cys195. Gly123 serves as a coordination point for ATP. The interval 145–147 (KDQ) is interaction with tRNA. Residue Cys195 is the Cysteine persulfide intermediate of the active site. The interval 307–308 (RY) is interaction with tRNA.

Belongs to the MnmA/TRMU family.

Its subcellular location is the cytoplasm. The catalysed reaction is S-sulfanyl-L-cysteinyl-[protein] + uridine(34) in tRNA + AH2 + ATP = 2-thiouridine(34) in tRNA + L-cysteinyl-[protein] + A + AMP + diphosphate + H(+). Its function is as follows. Catalyzes the 2-thiolation of uridine at the wobble position (U34) of tRNA, leading to the formation of s(2)U34. This Xylella fastidiosa (strain 9a5c) protein is tRNA-specific 2-thiouridylase MnmA.